The sequence spans 608 residues: Kinetochore protein NUF2 (608 aa).

Positions 121–125 (IGNLR) are required for nuclear localization and function. Coiled-coil stretches lie at residues 176–319 (FESQ…QQKL) and 358–460 (REKL…IEEE).

This sequence belongs to the NUF2 family.

It is found in the chromosome. Its subcellular location is the centromere. It localises to the kinetochore. Functionally, required for anchoring centrosomal cores to the nuclear periphery. Plays a role in chromosome segregation but is dispensable for centromere clustering. The protein is Kinetochore protein NUF2 of Toxoplasma gondii (strain ATCC 50611 / Me49).